The sequence spans 433 residues: GTPase Obg (433 aa).

The region spanning 4–162 is the Obg domain; that stretch reads EDFVDRVTIF…RWLELELKLL (159 aa). Residues 163–334 form the OBG-type G domain; sequence ADAGLIGFPN…LKQKIFEIVG (172 aa). GTP is bound by residues 169–176, 194–198, 216–219, 286–289, and 315–317; these read GFPNVGKS, FTTLV, DIPG, NKID, and SAL. The Mg(2+) site is built by Ser-176 and Thr-196. One can recognise an OCT domain in the interval 356–433; the sequence is TKIEERFDFE…IGQYSFEYKE (78 aa).

It belongs to the TRAFAC class OBG-HflX-like GTPase superfamily. OBG GTPase family. In terms of assembly, monomer. It depends on Mg(2+) as a cofactor.

It is found in the cytoplasm. Its function is as follows. An essential GTPase which binds GTP, GDP and possibly (p)ppGpp with moderate affinity, with high nucleotide exchange rates and a fairly low GTP hydrolysis rate. Plays a role in control of the cell cycle, stress response, ribosome biogenesis and in those bacteria that undergo differentiation, in morphogenesis control. This Pseudothermotoga lettingae (strain ATCC BAA-301 / DSM 14385 / NBRC 107922 / TMO) (Thermotoga lettingae) protein is GTPase Obg.